Here is a 233-residue protein sequence, read N- to C-terminus: Metallo-beta-lactamase domain-containing protein 1 (233 aa).

Zn(2+) is bound by residues His96, His98, Asp100, His101, His152, Asp174, and His213.

Belongs to the metallo-beta-lactamase superfamily. Glyoxalase II family. As to quaternary structure, homodimer. Zn(2+) is required as a cofactor.

It is found in the cytoplasm. Its subcellular location is the cytosol. The protein localises to the nucleus. It carries out the reaction a ribonucleotidyl-ribonucleotide-RNA + H2O = a 3'-end ribonucleotide-RNA + a 5'-end 5'-phospho-ribonucleoside-RNA + H(+). Its function is as follows. Endoribonuclease that catalyzes the hydrolysis of histone-coding pre-mRNA 3'-end. Involved in histone pre-mRNA processing during the S-phase of the cell cycle, which is required for entering/progressing through S-phase. Cleaves histone pre-mRNA at a major and a minor cleavage site after the 5'-ACCCA-3' and the 5'-ACCCACA-3' sequence, respectively, and located downstream of the stem-loop. May require the presence of the HDE element located at the histone pre-RNA 3'-end to avoid non-specific cleavage. The polypeptide is Metallo-beta-lactamase domain-containing protein 1 (mblac1) (Xenopus laevis (African clawed frog)).